Here is a 293-residue protein sequence, read N- to C-terminus: Elongation factor Ts (293 aa).

The tract at residues 80–83 is involved in Mg(2+) ion dislocation from EF-Tu; sequence TDFV.

Belongs to the EF-Ts family.

Its subcellular location is the cytoplasm. Its function is as follows. Associates with the EF-Tu.GDP complex and induces the exchange of GDP to GTP. It remains bound to the aminoacyl-tRNA.EF-Tu.GTP complex up to the GTP hydrolysis stage on the ribosome. The polypeptide is Elongation factor Ts (Staphylococcus aureus (strain Newman)).